Consider the following 228-residue polypeptide: uncharacterized protein (228 aa).

The segment at 90-115 (TDESEESSSANNTTTTASHTLSNSKK) is disordered. Low complexity predominate over residues 96–113 (SSSANNTTTTASHTLSNS).

The protein localises to the cytoplasm. The protein resides in the cell cortex. Its function is as follows. Deletion results in antifungal drug fluconazole-resistant phenotype. This is an uncharacterized protein from Saccharomyces cerevisiae (strain ATCC 204508 / S288c) (Baker's yeast).